Consider the following 484-residue polypeptide: tRNA sulfurtransferase (484 aa).

A THUMP domain is found at 63 to 167; that stretch reads REMIERLTCT…DQRLYVIHNQ (105 aa). ATP-binding positions include 185–186, Lys267, Gly289, and Gln298; that span reads LM. An intrachain disulfide couples Cys346 to Cys457. Residues 405–483 form the Rhodanese domain; sequence ALPGQIVIDI…GHANVRVYRP (79 aa). The Cysteine persulfide intermediate role is filled by Cys457.

It belongs to the ThiI family.

The protein resides in the cytoplasm. The catalysed reaction is [ThiI sulfur-carrier protein]-S-sulfanyl-L-cysteine + a uridine in tRNA + 2 reduced [2Fe-2S]-[ferredoxin] + ATP + H(+) = [ThiI sulfur-carrier protein]-L-cysteine + a 4-thiouridine in tRNA + 2 oxidized [2Fe-2S]-[ferredoxin] + AMP + diphosphate. The enzyme catalyses [ThiS sulfur-carrier protein]-C-terminal Gly-Gly-AMP + S-sulfanyl-L-cysteinyl-[cysteine desulfurase] + AH2 = [ThiS sulfur-carrier protein]-C-terminal-Gly-aminoethanethioate + L-cysteinyl-[cysteine desulfurase] + A + AMP + 2 H(+). Its pathway is cofactor biosynthesis; thiamine diphosphate biosynthesis. Its function is as follows. Catalyzes the ATP-dependent transfer of a sulfur to tRNA to produce 4-thiouridine in position 8 of tRNAs, which functions as a near-UV photosensor. Also catalyzes the transfer of sulfur to the sulfur carrier protein ThiS, forming ThiS-thiocarboxylate. This is a step in the synthesis of thiazole, in the thiamine biosynthesis pathway. The sulfur is donated as persulfide by IscS. In Pseudomonas putida (strain ATCC 47054 / DSM 6125 / CFBP 8728 / NCIMB 11950 / KT2440), this protein is tRNA sulfurtransferase.